Here is a 264-residue protein sequence, read N- to C-terminus: Myozenin-2 (264 aa).

Omega-N-methylarginine is present on Arg53. The segment at 90–135 (GRVDGSNLEGGSQQGPSTPPNTPDPRSPPNPENIAPGYSGPLKEIP) is disordered. Phosphoserine is present on Ser101. Residues 106–120 (STPPNTPDPRSPPNP) show a composition bias toward pro residues. Residues Thr107 and Thr111 each carry the phosphothreonine modification. Ser116 carries the phosphoserine modification.

The protein belongs to the myozenin family. Interacts via its C-terminus with spectrin repeats 3 and 4 of ACTN2. Interacts with ACTN1, LDB3, MYOT and PPP3CA. Expressed specifically in heart and skeletal muscle. In skeletal muscle, localized to the soleus and plantaris muscles, which are predominantly composed of slow-twitch fibers.

It localises to the cytoplasm. Its subcellular location is the myofibril. The protein localises to the sarcomere. The protein resides in the z line. In terms of biological role, myozenins may serve as intracellular binding proteins involved in linking Z line proteins such as alpha-actinin, gamma-filamin, TCAP/telethonin, LDB3/ZASP and localizing calcineurin signaling to the sarcomere. Plays an important role in the modulation of calcineurin signaling. May play a role in myofibrillogenesis. The protein is Myozenin-2 of Mus musculus (Mouse).